Reading from the N-terminus, the 215-residue chain is Vacuolar ATPase assembly integral membrane protein VPH2 (215 aa).

Topologically, residues M1–Q134 are cytoplasmic. The chain crosses the membrane as a helical span at residues V135–W155. Over T156 to R167 the chain is Lumenal. Residues L168 to Y186 form a helical membrane-spanning segment. Residues N187–L215 lie on the Cytoplasmic side of the membrane.

It is found in the endoplasmic reticulum membrane. Its function is as follows. Required for vacuolar ATPase assembly. This chain is Vacuolar ATPase assembly integral membrane protein VPH2 (VPH2), found in Saccharomyces cerevisiae (strain ATCC 204508 / S288c) (Baker's yeast).